Consider the following 285-residue polypeptide: uncharacterized protein (285 aa).

Positions 110, 131, 133, 135, 214, and 216 each coordinate Mn(2+).

The protein belongs to the arginase family. The cofactor is Mn(2+).

This is an uncharacterized protein from Methanothermus fervidus.